Reading from the N-terminus, the 115-residue chain is NADH-ubiquinone oxidoreductase chain 3 (115 aa).

A run of 3 helical transmembrane segments spans residues Met-1 to Ile-21, Phe-55 to Leu-75, and Ala-87 to Leu-107.

Belongs to the complex I subunit 3 family.

It is found in the mitochondrion membrane. It carries out the reaction a ubiquinone + NADH + 5 H(+)(in) = a ubiquinol + NAD(+) + 4 H(+)(out). Its function is as follows. Core subunit of the mitochondrial membrane respiratory chain NADH dehydrogenase (Complex I) that is believed to belong to the minimal assembly required for catalysis. Complex I functions in the transfer of electrons from NADH to the respiratory chain. The immediate electron acceptor for the enzyme is believed to be ubiquinone. This Myxine glutinosa (Atlantic hagfish) protein is NADH-ubiquinone oxidoreductase chain 3 (MT-ND3).